Consider the following 293-residue polypeptide: Pyridoxal 5'-phosphate synthase subunit PdxS (293 aa).

D23 is a binding site for D-ribose 5-phosphate. K80 acts as the Schiff-base intermediate with D-ribose 5-phosphate in catalysis. G152 contributes to the D-ribose 5-phosphate binding site. R164 contacts D-glyceraldehyde 3-phosphate. D-ribose 5-phosphate is bound by residues G213 and 234–235 (GS).

The protein belongs to the PdxS/SNZ family. In the presence of PdxT, forms a dodecamer of heterodimers.

The enzyme catalyses aldehydo-D-ribose 5-phosphate + D-glyceraldehyde 3-phosphate + L-glutamine = pyridoxal 5'-phosphate + L-glutamate + phosphate + 3 H2O + H(+). The protein operates within cofactor biosynthesis; pyridoxal 5'-phosphate biosynthesis. Catalyzes the formation of pyridoxal 5'-phosphate from ribose 5-phosphate (RBP), glyceraldehyde 3-phosphate (G3P) and ammonia. The ammonia is provided by the PdxT subunit. Can also use ribulose 5-phosphate and dihydroxyacetone phosphate as substrates, resulting from enzyme-catalyzed isomerization of RBP and G3P, respectively. The polypeptide is Pyridoxal 5'-phosphate synthase subunit PdxS (Thermus thermophilus (strain ATCC 27634 / DSM 579 / HB8)).